The following is a 436-amino-acid chain: Enolase 1 (436 aa).

Ser40 lines the Mg(2+) pocket. A disulfide bond links Cys147 and Cys169. (2R)-2-phosphoglycerate contacts are provided by Gln164 and Glu208. Glu208 serves as the catalytic Proton donor. The Mg(2+) site is built by Asp243, Glu296, and Asp322. Position 322 (Asp322) interacts with (2R)-2-phosphoglycerate. Lys347 functions as the Proton acceptor in the catalytic mechanism. Residues Arg376 and Ser377 each contribute to the (2R)-2-phosphoglycerate site.

This sequence belongs to the enolase family. As to quaternary structure, homodimer. Homotetramer. Interacts with methyltransferase METH; the interaction inhibits METH catalytic activity; 2-phosphoglycerate binding to ENO prevents the interaction with METH. Mg(2+) is required as a cofactor.

The protein localises to the cytoplasm. It localises to the nucleus. The catalysed reaction is (2R)-2-phosphoglycerate = phosphoenolpyruvate + H2O. It functions in the pathway carbohydrate degradation; glycolysis; pyruvate from D-glyceraldehyde 3-phosphate: step 4/5. Glycolytic enzyme that catalyzes the conversion of 2-phosphoglycerate to phosphoenolpyruvate. Inhibits tRNA methyltransferase METH catalytic activity in the absence of 2-phosphoglycerate. The chain is Enolase 1 from Entamoeba histolytica (strain ATCC 30459 / HM-1:IMSS / ABRM).